The chain runs to 539 residues: MAKTIAFDKKARRGLERGLNALADAVKVTLGPKGRNVVLEKKWGAPTITNDGVSIAKEIELEDPYEKIGAELVKEVAKKTDDVAGDGTTTATVLAQALVREGLRNVAAGANPLGLKRGIEKAVEAVTEHLLKAAKEVETKDQIAATAGISAGDPAIGELIAEAMDKVGKEGVITVEESNTFGLQLELTEGMRFDKGFISGYFATDAERQEAVLEDPYVLLVSGKISTVKDLLPLLEKVIQSGKPLAIIAEDVEGEALVTLIVNKIRGTFKSVAIKAPGFGDRRKAMLQDMAILTGGQVISEEIGLSLDTAGLEVLGQARQVVVTKDETTIVDGAGSKEQIAGRVSQIRAEIENSDSDYDREKLQERLAKLAGGVAVIKAGAATEDLKERKHRIEDAVRNAKAAVEEGIVAGGGSSLAQSGTVFDSXALEGDEATGANIVKVALDAPVKQIAVNAGLEPGVVAEKVRNSPAGTGLNAATGVYEDLLAAGINDPVKVTRSALQNAASIAALFLTTEAVVADKPEKAGAPVDPTGGMGGMDF.

Residues 29 to 32 (TLGP), 86 to 90 (DGTTT), glycine 412, 475 to 477 (NAA), and aspartate 491 contribute to the ATP site.

This sequence belongs to the chaperonin (HSP60) family. As to quaternary structure, forms a cylinder of 14 subunits composed of two heptameric rings stacked back-to-back. Interacts with the co-chaperonin GroES.

The protein resides in the cytoplasm. The catalysed reaction is ATP + H2O + a folded polypeptide = ADP + phosphate + an unfolded polypeptide.. Functionally, together with its co-chaperonin GroES, plays an essential role in assisting protein folding. The GroEL-GroES system forms a nano-cage that allows encapsulation of the non-native substrate proteins and provides a physical environment optimized to promote and accelerate protein folding. The chain is Chaperonin GroEL from Tsukamurella tyrosinosolvens.